A 158-amino-acid polypeptide reads, in one-letter code: Crossover junction endodeoxyribonuclease RuvC (158 aa).

Active-site residues include Asp-7, Glu-67, and Asp-140. Asp-7, Glu-67, and Asp-140 together coordinate Mg(2+).

It belongs to the RuvC family. As to quaternary structure, homodimer which binds Holliday junction (HJ) DNA. The HJ becomes 2-fold symmetrical on binding to RuvC with unstacked arms; it has a different conformation from HJ DNA in complex with RuvA. In the full resolvosome a probable DNA-RuvA(4)-RuvB(12)-RuvC(2) complex forms which resolves the HJ. Mg(2+) is required as a cofactor.

The protein localises to the cytoplasm. The catalysed reaction is Endonucleolytic cleavage at a junction such as a reciprocal single-stranded crossover between two homologous DNA duplexes (Holliday junction).. Its function is as follows. The RuvA-RuvB-RuvC complex processes Holliday junction (HJ) DNA during genetic recombination and DNA repair. Endonuclease that resolves HJ intermediates. Cleaves cruciform DNA by making single-stranded nicks across the HJ at symmetrical positions within the homologous arms, yielding a 5'-phosphate and a 3'-hydroxyl group; requires a central core of homology in the junction. The consensus cleavage sequence is 5'-(A/T)TT(C/G)-3'. Cleavage occurs on the 3'-side of the TT dinucleotide at the point of strand exchange. HJ branch migration catalyzed by RuvA-RuvB allows RuvC to scan DNA until it finds its consensus sequence, where it cleaves and resolves the cruciform DNA. This chain is Crossover junction endodeoxyribonuclease RuvC, found in Dictyoglomus thermophilum (strain ATCC 35947 / DSM 3960 / H-6-12).